Here is a 133-residue protein sequence, read N- to C-terminus: Small ribosomal subunit protein uS8 (133 aa).

The protein belongs to the universal ribosomal protein uS8 family. In terms of assembly, part of the 30S ribosomal subunit. Contacts proteins S5 and S12.

Functionally, one of the primary rRNA binding proteins, it binds directly to 16S rRNA central domain where it helps coordinate assembly of the platform of the 30S subunit. The chain is Small ribosomal subunit protein uS8 from Amoebophilus asiaticus (strain 5a2).